Here is a 689-residue protein sequence, read N- to C-terminus: DNA ligase (689 aa).

Residues 51-55 (DSEYD), 100-101 (SL), and Glu129 each bind NAD(+). Catalysis depends on Lys131, which acts as the N6-AMP-lysine intermediate. 4 residues coordinate NAD(+): Arg152, Glu189, Lys308, and Lys332. 4 residues coordinate Zn(2+): Cys426, Cys429, Cys444, and Cys450. The 81-residue stretch at 609–689 (ADEQPLKGQT…ELLALLAANS (81 aa)) folds into the BRCT domain.

The protein belongs to the NAD-dependent DNA ligase family. LigA subfamily. It depends on Mg(2+) as a cofactor. Requires Mn(2+) as cofactor.

The enzyme catalyses NAD(+) + (deoxyribonucleotide)n-3'-hydroxyl + 5'-phospho-(deoxyribonucleotide)m = (deoxyribonucleotide)n+m + AMP + beta-nicotinamide D-nucleotide.. Its function is as follows. DNA ligase that catalyzes the formation of phosphodiester linkages between 5'-phosphoryl and 3'-hydroxyl groups in double-stranded DNA using NAD as a coenzyme and as the energy source for the reaction. It is essential for DNA replication and repair of damaged DNA. The chain is DNA ligase from Shewanella sp. (strain ANA-3).